The sequence spans 460 residues: Cysteine--tRNA ligase (460 aa).

Residue cysteine 27 participates in Zn(2+) binding. Residues 29–39 (PTVYDDAHLGH) carry the 'HIGH' region motif. Cysteine 202, histidine 227, and glutamate 231 together coordinate Zn(2+). A 'KMSKS' region motif is present at residues 259-263 (KMSKS). Position 262 (lysine 262) interacts with ATP.

It belongs to the class-I aminoacyl-tRNA synthetase family. As to quaternary structure, monomer. Zn(2+) is required as a cofactor.

Its subcellular location is the cytoplasm. The catalysed reaction is tRNA(Cys) + L-cysteine + ATP = L-cysteinyl-tRNA(Cys) + AMP + diphosphate. This chain is Cysteine--tRNA ligase, found in Campylobacter lari (strain RM2100 / D67 / ATCC BAA-1060).